We begin with the raw amino-acid sequence, 524 residues long: Cytochrome P450 monooxygenase oblB (524 aa).

A run of 3 helical transmembrane segments spans residues 18 to 38 (ILNA…GLVI), 225 to 245 (FHSG…IHLI), and 322 to 342 (VLIG…VYYI). Cys-466 contributes to the heme binding site.

The protein belongs to the cytochrome P450 family. Heme serves as cofactor.

The protein resides in the membrane. The enzyme catalyses ophiobolin F + 4 reduced [NADPH--hemoprotein reductase] + 4 O2 = ophiobolin C + 4 oxidized [NADPH--hemoprotein reductase] + 6 H2O + 4 H(+). It functions in the pathway secondary metabolite biosynthesis; terpenoid biosynthesis. In terms of biological role, cytochrome P450 monooxygenase; part of the gene cluster that mediates the biosynthesis of the sesterterpenes ophiobolins, fungal phytotoxins with potential anti-cancer activities. The first step of the pathway is performed by the sesterterpene synthase oblA that possesses both prenyl transferase and terpene cyclase activity, converting isopentenyl diphosphate and dimethylallyl diphosphate into geranylfarnesyl diphosphate (GFPP) and further converting GFPP into ophiobolin F, respectively. Other sesterterpenoids (C(25) terpenoids) are found as minor products of oblA. The cytochrome P450 monooxygenase oblB then catalyzes a four-step oxidative transformation of ophiobolin F to yield ophiobolin C. The FAD-dependent oxidoreductase oblC might be involved in a later oxidation step that produces ophiobolin A. The polypeptide is Cytochrome P450 monooxygenase oblB (Cochliobolus heterostrophus (strain C5 / ATCC 48332 / race O) (Southern corn leaf blight fungus)).